The sequence spans 156 residues: MNKQVEIFTDGSCLGNPGPGGYGIVMRYKQVEKTLARGYRLTTNNRMEMLAAVMALQALKEPCRVILTTDSQYVRQGITQWIHNWKLRGWKTADKKPVKNADLWQALDKETARHQVEWRWVKGHAGHRENEMCDELARQAAENPTEDDIGYQPEPQ.

One can recognise an RNase H type-1 domain in the interval 1–142; it reads MNKQVEIFTD…CDELARQAAE (142 aa). Mg(2+)-binding residues include Asp10, Glu48, Asp70, and Asp134. The disordered stretch occupies residues 135 to 156; it reads ELARQAAENPTEDDIGYQPEPQ.

Belongs to the RNase H family. In terms of assembly, monomer. Requires Mg(2+) as cofactor.

It localises to the cytoplasm. The catalysed reaction is Endonucleolytic cleavage to 5'-phosphomonoester.. In terms of biological role, endonuclease that specifically degrades the RNA of RNA-DNA hybrids. This Vibrio cholerae serotype O1 (strain M66-2) protein is Ribonuclease H.